Reading from the N-terminus, the 292-residue chain is NAD kinase (292 aa).

The active-site Proton acceptor is Asp64. NAD(+)-binding positions include 64–65 (DG), 138–139 (ND), Arg149, Arg166, Asp168, 179–184 (TGYAVS), and Gln238.

It belongs to the NAD kinase family. A divalent metal cation serves as cofactor.

It is found in the cytoplasm. The catalysed reaction is NAD(+) + ATP = ADP + NADP(+) + H(+). In terms of biological role, involved in the regulation of the intracellular balance of NAD and NADP, and is a key enzyme in the biosynthesis of NADP. Catalyzes specifically the phosphorylation on 2'-hydroxyl of the adenosine moiety of NAD to yield NADP. This Oleidesulfovibrio alaskensis (strain ATCC BAA-1058 / DSM 17464 / G20) (Desulfovibrio alaskensis) protein is NAD kinase.